Consider the following 647-residue polypeptide: Acetyl-coenzyme A synthetase (647 aa).

CoA is bound by residues 190 to 193 (RGGK), Thr-310, and Asn-334. Residues 386-388 (GEP), 410-415 (DTWWQT), Asp-499, and Arg-514 each bind ATP. A CoA-binding site is contributed by Ser-522. Residue Arg-525 participates in ATP binding. Mg(2+) contacts are provided by Val-536, His-538, and Val-541. CoA is bound at residue Arg-583. Lys-608 is modified (N6-acetyllysine).

It belongs to the ATP-dependent AMP-binding enzyme family. Requires Mg(2+) as cofactor. In terms of processing, acetylated. Deacetylation by the SIR2-homolog deacetylase activates the enzyme.

It catalyses the reaction acetate + ATP + CoA = acetyl-CoA + AMP + diphosphate. In terms of biological role, catalyzes the conversion of acetate into acetyl-CoA (AcCoA), an essential intermediate at the junction of anabolic and catabolic pathways. AcsA undergoes a two-step reaction. In the first half reaction, AcsA combines acetate with ATP to form acetyl-adenylate (AcAMP) intermediate. In the second half reaction, it can then transfer the acetyl group from AcAMP to the sulfhydryl group of CoA, forming the product AcCoA. The sequence is that of Acetyl-coenzyme A synthetase from Xanthomonas axonopodis pv. citri (strain 306).